Reading from the N-terminus, the 112-residue chain is Small ribosomal subunit protein bS6 (112 aa).

This sequence belongs to the bacterial ribosomal protein bS6 family.

Binds together with bS18 to 16S ribosomal RNA. This chain is Small ribosomal subunit protein bS6, found in Chlamydia felis (strain Fe/C-56) (Chlamydophila felis).